Reading from the N-terminus, the 72-residue chain is MAHYFGGKSFYLPAGDKIKEALRDAQIYQEFNGKNVPDLIKKYRLSESTIYAILRNQRTLQRKRHQMDFNFS.

A DNA-binding region (H-T-H motif) is located at residues 35-55; that stretch reads NVPDLIKKYRLSESTIYAILR.

The protein belongs to the c/mor transcriptional regulatory family.

Functionally, required for transcription of the phage late genes. The sequence is that of Mu-like prophage FluMu protein C from Haemophilus influenzae (strain ATCC 51907 / DSM 11121 / KW20 / Rd).